Reading from the N-terminus, the 239-residue chain is MATPHINAEMGDFADVVLMPGDPLRAKHIAETFLEDVREVNNVRGMLGFTGTYKGRKISVMGHGMGIPSCSIYTKELITDFGVKKIIRVGSCGAVRMDVKLRDVVIGMGACTDSKVNRIRFKDHDFAAIADFDMVRNAVDAAKALGVDARVGNLFSADLFYSPDGEMFDVMEKYGVLGVEMEAAGIYGVAAEFGAKALTICTVSDHIRTHEQTTAAERQTTFNDMIKIALESVLLGDKE.

His5 lines the a purine D-ribonucleoside pocket. Phosphate contacts are provided by residues Gly21, Arg25, Arg44, and 88–91 (RVGS). Residues 180 to 182 (EME) and 204 to 205 (SD) each bind a purine D-ribonucleoside. Catalysis depends on Asp205, which acts as the Proton donor.

Belongs to the PNP/UDP phosphorylase family. As to quaternary structure, homohexamer; trimer of homodimers.

The enzyme catalyses a purine D-ribonucleoside + phosphate = a purine nucleobase + alpha-D-ribose 1-phosphate. It catalyses the reaction a purine 2'-deoxy-D-ribonucleoside + phosphate = a purine nucleobase + 2-deoxy-alpha-D-ribose 1-phosphate. Functionally, catalyzes the reversible phosphorolytic breakdown of the N-glycosidic bond in the beta-(deoxy)ribonucleoside molecules, with the formation of the corresponding free purine bases and pentose-1-phosphate. This is Purine nucleoside phosphorylase DeoD-type from Salmonella agona (strain SL483).